The following is a 304-amino-acid chain: MKHYGEYKNLFSKLYEESQIQLDAKMSEHIYFKVGGPVDILLTPNSIQQVKETITICKENNIPFYVIGNGSNILVKDGGIRGVVIKLCELNKIECIGNKIIAECGALLKDVSKAATEGSLAGFQFACGIPGSVGGAVFMNAGAYDGEISFVIESAEVLDDNQEIRIIPKSELNLGYRQSVVMQKGYIVLRATFNLVNGDKEKIQARVDELTKRREERQPLEYPSAGSTFKRPEGYFAGKLIEDAGLKGFAIGGACVSEKHAGFVINCKNGTAKDVLDVIYHVRDEVKKQFGVDLYPEVRIWGED.

Positions 33–198 constitute an FAD-binding PCMH-type domain; that stretch reads KVGGPVDILL…LRATFNLVNG (166 aa). The active site involves R177. Catalysis depends on S227, which acts as the Proton donor. E297 is an active-site residue.

The protein belongs to the MurB family. It depends on FAD as a cofactor.

The protein localises to the cytoplasm. The catalysed reaction is UDP-N-acetyl-alpha-D-muramate + NADP(+) = UDP-N-acetyl-3-O-(1-carboxyvinyl)-alpha-D-glucosamine + NADPH + H(+). The protein operates within cell wall biogenesis; peptidoglycan biosynthesis. Its function is as follows. Cell wall formation. This Clostridium beijerinckii (strain ATCC 51743 / NCIMB 8052) (Clostridium acetobutylicum) protein is UDP-N-acetylenolpyruvoylglucosamine reductase.